An 822-amino-acid chain; its full sequence is Lysine-specific histone demethylase 2 (822 aa).

A compositionally biased stretch (basic residues) spans 1–11 (MATPRGRTKKK). The segment at 1–47 (MATPRGRTKKKASFDHSPDSLPLRSSGRQAKKKATETTDEDEDGGSE) is disordered. Phosphoserine occurs at positions 13, 17, and 26. The Zn(2+) site is built by Cys-53, Cys-58, Cys-65, Cys-73, His-84, His-90, Cys-92, Cys-95, Cys-142, Cys-147, Cys-169, and Cys-185. A CW-type zinc finger spans residues 133 to 193 (DQQLPYWVQC…HCSLPEDLRV (61 aa)). Residue Ser-247 is modified to Phosphoserine. The GLYR1-binding stretch occupies residues 273–292 (YQPNECGKALCVRPDVMELD). One can recognise an SWIRM domain in the interval 275 to 373 (PNECGKALCV…TGVLSVGADQ (99 aa)). Residue 383-439 (KSVIIIGAGPAGLAAARQLHNFGIKVTVLEAKDRIGGRVWDDKSFKGVTVGRGAQIV) participates in FAD binding. 3 histone H3-binding regions span residues 438-467 (IVNGCINNPVALMCEQLGISMHKFGERCDL), 487-498 (FNALLDVVSEWR), and 538-572 (FHLSNLEYACGSNLHQVSARSWDHNEFFAQFAGDH). A GLYR1-binding region spans residues 564 to 566 (FFA). FAD contacts are provided by residues Val-598, Glu-795, and 803 to 805 (QTV). A GLYR1-binding region spans residues 798 to 814 (NRHFPQTVTGAYLSGVR).

The protein belongs to the flavin monoamine oxidase family. In terms of assembly, interacts with its cofactor GLYR1 at nucleosomes; this interaction stimulates H3K4me1 and H3K4me2 demethylation. In contrast to KDM1A, does not form a complex with RCOR1/CoREST. Possible accessory component of the polycomb repressive deubiquitinase (PR-DUB) complex, at least composed of BAP1, one of ASXL1, ASXL2 or (probably) ASXL3 and one of MBD5 or MBD6. The PR-DUB core associates with a number of accessory proteins, including FOXK1, FOXK2, KDM1B, HCFC1 and OGT; KDM1B specifically associates with ASXL2 PR-DUB complexes. The cofactor is FAD. Zn(2+) is required as a cofactor.

It localises to the nucleus. Its subcellular location is the chromosome. It carries out the reaction N(6),N(6)-dimethyl-L-lysyl(4)-[histone H3] + 2 A + 2 H2O = L-lysyl(4)-[histone H3] + 2 formaldehyde + 2 AH2. It catalyses the reaction N(6)-methyl-L-lysyl(4)-[histone H3] + A + H2O = L-lysyl(4)-[histone H3] + formaldehyde + AH2. With respect to regulation, histone H3K4me1 and H3K4me2 demethylase activity is inhibited by DNA, this inhibition is released in complex with GLYR1. Its function is as follows. Histone demethylase that demethylates 'Lys-4' of histone H3, a specific tag for epigenetic transcriptional activation, thereby acting as a corepressor. Required for de novo DNA methylation of a subset of imprinted genes during oogenesis. Acts by oxidizing the substrate by FAD to generate the corresponding imine that is subsequently hydrolyzed. Demethylates both mono- and di-methylated 'Lys-4' of histone H3. Has no effect on tri-methylated 'Lys-4', mono-, di- or tri-methylated 'Lys-9', mono-, di- or tri-methylated 'Lys-27', mono-, di- or tri-methylated 'Lys-36' of histone H3, or on mono-, di- or tri-methylated 'Lys-20' of histone H4. Alone, it is unable to demethylate H3K4me on nucleosomes and requires the presence of GLYR1 to achieve such activity, they form a multifunctional enzyme complex that modifies transcribed chromatin and facilitates Pol II transcription through nucleosomes. This chain is Lysine-specific histone demethylase 2, found in Homo sapiens (Human).